A 198-amino-acid chain; its full sequence is Small ribosomal subunit protein uS4 (198 aa).

The S4 RNA-binding domain occupies 90–152 (TRLDNLVLRA…SRSNELFKEN (63 aa)).

This sequence belongs to the universal ribosomal protein uS4 family. Part of the 30S ribosomal subunit. Contacts protein S5. The interaction surface between S4 and S5 is involved in control of translational fidelity.

Functionally, one of the primary rRNA binding proteins, it binds directly to 16S rRNA where it nucleates assembly of the body of the 30S subunit. In terms of biological role, with S5 and S12 plays an important role in translational accuracy. The sequence is that of Small ribosomal subunit protein uS4 from Finegoldia magna (strain ATCC 29328 / DSM 20472 / WAL 2508) (Peptostreptococcus magnus).